The chain runs to 201 residues: Peroxiredoxin-2F, mitochondrial (201 aa).

The N-terminal 30 residues, 1–30, are a transit peptide targeting the mitochondrion; sequence MAMSILKLRNLSALRSAANSARIGVSSRGF. Thr37 is subject to Phosphothreonine. One can recognise a Thioredoxin domain in the interval 37 to 201; the sequence is TDITSAAPGV…TGAEVILGQI (165 aa). The active-site Cysteine sulfenic acid (-SOH) intermediate is Cys89. Ser149 carries the phosphoserine modification.

It belongs to the peroxiredoxin family. Prx5 subfamily. In terms of assembly, monomer. As to expression, expressed in the whole plant.

Its subcellular location is the mitochondrion matrix. It catalyses the reaction [glutaredoxin]-dithiol + a hydroperoxide = [glutaredoxin]-disulfide + an alcohol + H2O. In terms of biological role, thiol-specific peroxidase that catalyzes the reduction of hydrogen peroxide and organic hydroperoxides to water and alcohols, respectively. Plays a role in cell protection against oxidative stress by detoxifying peroxides. Reduces preferentially hydrogen peroxide rather than alkyl peroxides. May be involved in mitochondrial redox homeostasis. The polypeptide is Peroxiredoxin-2F, mitochondrial (PRXIIF) (Arabidopsis thaliana (Mouse-ear cress)).